Here is a 107-residue protein sequence, read N- to C-terminus: uncharacterized protein (107 aa).

A helical membrane pass occupies residues 9–31 (AAAIITAPTILAMMSTVLRALIF).

The protein localises to the membrane. This is an uncharacterized protein from Archaeoglobus fulgidus (strain ATCC 49558 / DSM 4304 / JCM 9628 / NBRC 100126 / VC-16).